A 204-amino-acid chain; its full sequence is 3,4-dihydroxy-2-butanone 4-phosphate synthase (204 aa).

A Mg(2+)-binding site is contributed by Glu-27. Asp-31 lines the D-ribulose 5-phosphate pocket. S-glutathionyl cysteine is present on Cys-56. Residues Thr-82 and 140-144 (RDGHT) each bind D-ribulose 5-phosphate. His-143 is a Mg(2+) binding site.

This sequence belongs to the DHBP synthase family. Homodimer. Mg(2+) is required as a cofactor. It depends on Mn(2+) as a cofactor. S-glutathionylation is reversible and dependent on a glutaredoxin.

The catalysed reaction is D-ribulose 5-phosphate = (2S)-2-hydroxy-3-oxobutyl phosphate + formate + H(+). It functions in the pathway cofactor biosynthesis; riboflavin biosynthesis; 2-hydroxy-3-oxobutyl phosphate from D-ribulose 5-phosphate: step 1/1. Functionally, catalyzes the conversion of D-ribulose 5-phosphate to formate and 3,4-dihydroxy-2-butanone 4-phosphate. The protein is 3,4-dihydroxy-2-butanone 4-phosphate synthase of Schizosaccharomyces pombe (strain 972 / ATCC 24843) (Fission yeast).